A 664-amino-acid chain; its full sequence is Probable LRR receptor-like serine/threonine-protein kinase At1g63430 (664 aa).

Residues Met1–Gly22 form the signal peptide. At Phe23–Trp288 the chain is on the extracellular side. Asn75 is a glycosylation site (N-linked (GlcNAc...) asparagine). LRR repeat units follow at residues Tyr94–Leu116, Asn118–Leu140, Gly142–Lys165, and Tyr166–Gln178. Asn197 carries an N-linked (GlcNAc...) asparagine glycan. A helical membrane pass occupies residues Leu289–Phe309. Residues Ser310–Ser664 lie on the Cytoplasmic side of the membrane. One can recognise a Protein kinase domain in the interval Glu360–Ile642.

It belongs to the protein kinase superfamily. Ser/Thr protein kinase family.

The protein localises to the cell membrane. The enzyme catalyses L-seryl-[protein] + ATP = O-phospho-L-seryl-[protein] + ADP + H(+). It catalyses the reaction L-threonyl-[protein] + ATP = O-phospho-L-threonyl-[protein] + ADP + H(+). This Arabidopsis thaliana (Mouse-ear cress) protein is Probable LRR receptor-like serine/threonine-protein kinase At1g63430.